We begin with the raw amino-acid sequence, 268 residues long: Hydroxyethylthiazole kinase (268 aa).

Methionine 46 lines the substrate pocket. 2 residues coordinate ATP: arginine 122 and threonine 168. Glycine 195 provides a ligand contact to substrate.

This sequence belongs to the Thz kinase family. Mg(2+) is required as a cofactor.

It carries out the reaction 5-(2-hydroxyethyl)-4-methylthiazole + ATP = 4-methyl-5-(2-phosphooxyethyl)-thiazole + ADP + H(+). It participates in cofactor biosynthesis; thiamine diphosphate biosynthesis; 4-methyl-5-(2-phosphoethyl)-thiazole from 5-(2-hydroxyethyl)-4-methylthiazole: step 1/1. Functionally, catalyzes the phosphorylation of the hydroxyl group of 4-methyl-5-beta-hydroxyethylthiazole (THZ). This Desulfatibacillum aliphaticivorans protein is Hydroxyethylthiazole kinase.